Reading from the N-terminus, the 1288-residue chain is Symplekin (1288 aa).

The tract at residues 1 to 124 is interaction with HSF1; sequence MASSSGDSVT…NMLLRDENVN (124 aa). Ser13 carries the phosphoserine modification. 5 HEAT repeats span residues 31 to 64, 67 to 101, 104 to 146, 153 to 192, and 227 to 266; these read TTSE…LIIN, PTLL…EACK, IELL…WMVK, LQEA…GLIV, and VLWE…IARQ. The interval 335 to 392 is disordered; sequence IARNMPSSKDSRKRPRDDTDSTLKKMKLEPNLGEDDEDKDLEPGPSGTSKASAQISGQ. A Nuclear localization signal motif is present at residues 345-360; that stretch reads SRKRPRDDTDSTLKKM. A compositionally biased stretch (basic and acidic residues) spans 349–362; sequence PRDDTDSTLKKMKL. Lys361 participates in a covalent cross-link: Glycyl lysine isopeptide (Lys-Gly) (interchain with G-Cter in SUMO1); alternate. Lys361 participates in a covalent cross-link: Glycyl lysine isopeptide (Lys-Gly) (interchain with G-Cter in SUMO2); alternate. Residues 380–392 show a composition bias toward polar residues; that stretch reads SGTSKASAQISGQ. Lys483 is covalently cross-linked (Glycyl lysine isopeptide (Lys-Gly) (interchain with G-Cter in SUMO2)). Ser494 is subject to Phosphoserine. 2 disordered regions span residues 1130-1151 and 1163-1288; these read PAPA…PPQD and LKRQ…KGNS. Pro residues predominate over residues 1131–1149; it reads APAPAPAPAPAPAPAPRPP. A compositionally biased stretch (basic and acidic residues) spans 1163–1173; it reads LKRQLEEEQKQ. Phosphoserine occurs at positions 1238 and 1239. Lys1256 participates in a covalent cross-link: Glycyl lysine isopeptide (Lys-Gly) (interchain with G-Cter in SUMO1). Residue Ser1260 is modified to Phosphoserine. Residues 1267–1288 show a composition bias toward basic and acidic residues; it reads AVEEALKTSSPETREPESKGNS. Position 1274 is a phosphothreonine (Thr1274). The residue at position 1276 (Ser1276) is a Phosphoserine.

It belongs to the Symplekin family. Found in a heat-sensitive complex at least composed of several cleavage and polyadenylation specific and cleavage stimulation factors. Interacts with CPSF2, CPSF3 and CSTF2. Interacts (via N-terminus) with HSF1; this interaction is direct and occurs upon heat shock. Interacts with SSU72.

It is found in the cytoplasm. It localises to the cytoskeleton. The protein localises to the cell junction. The protein resides in the tight junction. Its subcellular location is the cell membrane. It is found in the nucleus. It localises to the nucleoplasm. Its function is as follows. Scaffold protein that functions as a component of a multimolecular complex involved in histone mRNA 3'-end processing. Specific component of the tight junction (TJ) plaque, but might not be an exclusively junctional component. May have a house-keeping rule. Is involved in pre-mRNA polyadenylation. Enhances SSU72 phosphatase activity. In Mus musculus (Mouse), this protein is Symplekin (Sympk).